A 164-amino-acid polypeptide reads, in one-letter code: HTH-type transcriptional regulator PapX (164 aa).

The region spanning 25-159 is the HTH marR-type domain; the sequence is EHLLMQLCIR…FEVISKKLLA (135 aa).

It localises to the cytoplasm. The sequence is that of HTH-type transcriptional regulator PapX (papX) from Escherichia coli.